Here is a 352-residue protein sequence, read N- to C-terminus: Speedy protein E16 (352 aa).

The interval 1 to 90 (MDRTETRFRK…EPEKELAPEP (90 aa)) is disordered. The span at 18–40 (ITTSRQPHPQNEQSPQRSTSGYS) shows a compositional bias: polar residues. A compositionally biased stretch (acidic residues) spans 76 to 90 (DESEEEPEKELAPEP).

Belongs to the Speedy/Ringo family.

The sequence is that of Speedy protein E16 from Homo sapiens (Human).